Consider the following 209-residue polypeptide: Ribosomal RNA large subunit methyltransferase E (209 aa).

S-adenosyl-L-methionine contacts are provided by G63, W65, D83, D99, and D124. The Proton acceptor role is filled by K164.

Belongs to the class I-like SAM-binding methyltransferase superfamily. RNA methyltransferase RlmE family.

The protein localises to the cytoplasm. The catalysed reaction is uridine(2552) in 23S rRNA + S-adenosyl-L-methionine = 2'-O-methyluridine(2552) in 23S rRNA + S-adenosyl-L-homocysteine + H(+). Functionally, specifically methylates the uridine in position 2552 of 23S rRNA at the 2'-O position of the ribose in the fully assembled 50S ribosomal subunit. In Aliivibrio salmonicida (strain LFI1238) (Vibrio salmonicida (strain LFI1238)), this protein is Ribosomal RNA large subunit methyltransferase E.